A 143-amino-acid polypeptide reads, in one-letter code: Nucleoside diphosphate kinase (143 aa).

Residues Lys11, Phe59, Arg87, Thr93, Arg104, and Asn114 each coordinate ATP. The active-site Pros-phosphohistidine intermediate is the His117.

The protein belongs to the NDK family. In terms of assembly, homotetramer. It depends on Mg(2+) as a cofactor.

The protein localises to the cytoplasm. It catalyses the reaction a 2'-deoxyribonucleoside 5'-diphosphate + ATP = a 2'-deoxyribonucleoside 5'-triphosphate + ADP. The catalysed reaction is a ribonucleoside 5'-diphosphate + ATP = a ribonucleoside 5'-triphosphate + ADP. Functionally, major role in the synthesis of nucleoside triphosphates other than ATP. The ATP gamma phosphate is transferred to the NDP beta phosphate via a ping-pong mechanism, using a phosphorylated active-site intermediate. In Shewanella loihica (strain ATCC BAA-1088 / PV-4), this protein is Nucleoside diphosphate kinase.